Consider the following 71-residue polypeptide: Putative defensin-like protein 303 (71 aa).

Residues 1 to 25 form the signal peptide; the sequence is MKSNKATFFLGLLLVYAFCIMLIES. Cystine bridges form between cysteine 27/cysteine 45, cysteine 33/cysteine 50, and cysteine 39/cysteine 52.

This sequence belongs to the DEFL family.

It is found in the secreted. In Arabidopsis thaliana (Mouse-ear cress), this protein is Putative defensin-like protein 303.